Consider the following 458-residue polypeptide: MHDKTWSGRFNEPVSELVKQYTASIGFDQRLAEWDIQGSLAHAQMLTRSGVLSENDLTDIRRGMSEILEEIRSGKIEWPLDLEDVHMNIERRLTDKIGDAGKRLHTGRSRNDQVATDIRLWLRDQITVIQNLIQNLQTALLDLAEQNAEAVMPGFTHLQVAQPVSFGHHMLAYVEMLGRDFERMTDCRKRVNRMPLGAAALAGTTYPIQREITAELLGFEQICQNSLDAVSDRDFAIEFTAAASLVMVHLSRLSEELILWMSPRFGFIDIADRFCTGSSIMPQKKNPDVPELVRGKSGRVIGHLIGLITLMKSQPLAYNKDNQEDKEPLFDTADTLIDTLRIYADMMRGVTVKPGNMRAAVMQGFATATDLADYLVKKGMPFRDAHEVVAQAVRHADEAGVDLSELPLEALQGFSKLISDDVYGVLTPEGSLNARNHLGGTAPEQVRLQVKRWREMSA.

Belongs to the lyase 1 family. Argininosuccinate lyase subfamily.

It localises to the cytoplasm. It catalyses the reaction 2-(N(omega)-L-arginino)succinate = fumarate + L-arginine. Its pathway is amino-acid biosynthesis; L-arginine biosynthesis; L-arginine from L-ornithine and carbamoyl phosphate: step 3/3. The protein is Argininosuccinate lyase of Neisseria gonorrhoeae (strain ATCC 700825 / FA 1090).